Consider the following 557-residue polypeptide: 2-succinyl-5-enolpyruvyl-6-hydroxy-3-cyclohexene-1-carboxylate synthase (557 aa).

This sequence belongs to the TPP enzyme family. MenD subfamily. Homodimer. Requires Mg(2+) as cofactor. Mn(2+) serves as cofactor. It depends on thiamine diphosphate as a cofactor.

The enzyme catalyses isochorismate + 2-oxoglutarate + H(+) = 5-enolpyruvoyl-6-hydroxy-2-succinyl-cyclohex-3-ene-1-carboxylate + CO2. The protein operates within quinol/quinone metabolism; 1,4-dihydroxy-2-naphthoate biosynthesis; 1,4-dihydroxy-2-naphthoate from chorismate: step 2/7. Its pathway is quinol/quinone metabolism; menaquinone biosynthesis. Catalyzes the thiamine diphosphate-dependent decarboxylation of 2-oxoglutarate and the subsequent addition of the resulting succinic semialdehyde-thiamine pyrophosphate anion to isochorismate to yield 2-succinyl-5-enolpyruvyl-6-hydroxy-3-cyclohexene-1-carboxylate (SEPHCHC). This is 2-succinyl-5-enolpyruvyl-6-hydroxy-3-cyclohexene-1-carboxylate synthase from Yersinia enterocolitica serotype O:8 / biotype 1B (strain NCTC 13174 / 8081).